A 53-amino-acid chain; its full sequence is UPF0391 membrane protein GFO_1615 (53 aa).

The next 2 helical transmembrane spans lie at 4–24 and 27–47; these read LIVI…GGVA and AADI…ISVL.

It belongs to the UPF0391 family.

The protein resides in the cell membrane. This is UPF0391 membrane protein GFO_1615 from Christiangramia forsetii (strain DSM 17595 / CGMCC 1.15422 / KT0803) (Gramella forsetii).